Consider the following 131-residue polypeptide: Holo-[acyl-carrier-protein] synthase (131 aa).

Mg(2+)-binding residues include Asp8 and Glu59.

This sequence belongs to the P-Pant transferase superfamily. AcpS family. It depends on Mg(2+) as a cofactor.

It is found in the cytoplasm. The enzyme catalyses apo-[ACP] + CoA = holo-[ACP] + adenosine 3',5'-bisphosphate + H(+). In terms of biological role, transfers the 4'-phosphopantetheine moiety from coenzyme A to a Ser of acyl-carrier-protein. This is Holo-[acyl-carrier-protein] synthase from Rickettsia felis (strain ATCC VR-1525 / URRWXCal2) (Rickettsia azadi).